The sequence spans 479 residues: MIIFEKSVPGRKAYRLPDEELQRIDPVFPEHLKRTRPLRLPELSEPDVVRHYTALAEKNYSVDKGFYPLGSCTMKYNPKLNEYVAGLEGFTDIHPYQPWESVQGALQVMYELKEFLCEITGMDEMTLQPAAGAHGELTGMLIVRAYHLSRNDKKRHVALVPDSAHGTNPASAAMAGFDVVEIKSTEDGLVDLEQLENHLNDEIAVLMLTNPNTLGLFEKDIVKIAEKVHQAGALLYYDGANLNAIMGKIKPGEMGFDIVHLNLHKTFSAPHGMGGPGSGPVGVKAFLSEFLPIPIIRKDGDKYYPDFKLPNSIGRTRSFYGNFLVLLKAYVYILSMGKDGLTRASEMAVLNANYLRSLISKFLKIASPGICMHEFVVDGSQFVKETGVKILDVAKRILDYGLHAPTVYFPLIVHEDMMIEPTETENKNTLDYFAKVLEKIVEEAKKTPEVVKTAPHTTPVKRLDDITATKKPVYRYRLS.

Lysine 265 carries the post-translational modification N6-(pyridoxal phosphate)lysine.

The protein belongs to the GcvP family. C-terminal subunit subfamily. In terms of assembly, the glycine cleavage system is composed of four proteins: P, T, L and H. In this organism, the P 'protein' is a heterodimer of two subunits. The cofactor is pyridoxal 5'-phosphate.

It catalyses the reaction N(6)-[(R)-lipoyl]-L-lysyl-[glycine-cleavage complex H protein] + glycine + H(+) = N(6)-[(R)-S(8)-aminomethyldihydrolipoyl]-L-lysyl-[glycine-cleavage complex H protein] + CO2. In terms of biological role, the glycine cleavage system catalyzes the degradation of glycine. The P protein binds the alpha-amino group of glycine through its pyridoxal phosphate cofactor; CO(2) is released and the remaining methylamine moiety is then transferred to the lipoamide cofactor of the H protein. This Pseudothermotoga lettingae (strain ATCC BAA-301 / DSM 14385 / NBRC 107922 / TMO) (Thermotoga lettingae) protein is Probable glycine dehydrogenase (decarboxylating) subunit 2.